Consider the following 230-residue polypeptide: Exosome complex component Rrp4 (230 aa).

One can recognise an S1 motif domain in the interval 60-129 (NDKVIGKVID…EIKESWLSLK (70 aa)). Residues 137-195 (EEGSIIYIKAPKVPRVIGKAGNMINMIKSETNTKIIVGQNGLIWIDGEPENVDLAINAI) enclose the KH domain.

It belongs to the RRP4 family. Component of the archaeal exosome complex. Forms a trimer of Rrp4 and/or Csl4 subunits. The trimer associates with a hexameric ring-like arrangement composed of 3 Rrp41-Rrp42 heterodimers.

The protein resides in the cytoplasm. Functionally, non-catalytic component of the exosome, which is a complex involved in RNA degradation. Increases the RNA binding and the efficiency of RNA degradation. Confers strong poly(A) specificity to the exosome. The polypeptide is Exosome complex component Rrp4 (Picrophilus torridus (strain ATCC 700027 / DSM 9790 / JCM 10055 / NBRC 100828 / KAW 2/3)).